Reading from the N-terminus, the 910-residue chain is DNA mismatch repair protein MutS (910 aa).

Basic and acidic residues predominate over residues 1–11; sequence MEAKVEEKEPE. The interval 1–21 is disordered; the sequence is MEAKVEEKEPEPVENAGPDAP. 658–665 is an ATP binding site; that stretch reads GPNMGGKS.

The protein belongs to the DNA mismatch repair MutS family.

In terms of biological role, this protein is involved in the repair of mismatches in DNA. It is possible that it carries out the mismatch recognition step. This protein has a weak ATPase activity. The polypeptide is DNA mismatch repair protein MutS (Brucella canis (strain ATCC 23365 / NCTC 10854 / RM-666)).